The primary structure comprises 4351 residues: Protocadherin Fat 2 (4351 aa).

The signal sequence occupies residues 1–18; it reads MTLVLLGVAMVLLHRAAC. Residues 19–4050 lie on the Extracellular side of the membrane; that stretch reads EKPLEETITP…IKRGDWGQQE (4032 aa). Cadherin domains follow at residues 34 to 148 and 149 to 256; these read THSL…KPLF and SPPS…PPVI. 4 N-linked (GlcNAc...) asparagine glycosylation sites follow: Asn-39, Asn-210, Asn-280, and Asn-330. 31 consecutive Cadherin domains span residues 363 to 458, 459 to 564, 565 to 669, 716 to 820, 821 to 925, 926 to 1032, 1033 to 1142, 1138 to 1242, 1243 to 1346, 1350 to 1448, 1449 to 1555, 1556 to 1660, 1661 to 1758, 1759 to 1872, 1873 to 1968, 1969 to 2070, 2071 to 2171, 2172 to 2272, 2273 to 2379, 2380 to 2481, 2482 to 2585, 2586 to 2692, 2693 to 2799, 2800 to 2908, 2909 to 3013, 3014 to 3115, 3116 to 3220, 3221 to 3323, 3324 to 3428, 3429 to 3533, and 3534 to 3631; these read EKAV…APVF, NRSS…QPMF, EEVN…VPVQ, DHFP…PPRF, PPGG…PPQC, ITEH…SPHF, SSFV…RPVF, SRPV…SPMF, SHKL…SSIP, DESH…RPQF, LQDH…SPHF, TQPR…APIF, SKDE…APAF, LKST…PPRF, SEQI…SLQF, DQDI…IPEF, QHLP…NPLF, QSPY…PPTF, SQLV…PPEF, REPQ…SPEF, QQNV…APQF, KASG…LPKF, SEPL…RPVF, EADP…PPRF, ASED…SPQC, SQLL…APRF, FPSH…LPIF, LNSE…HPRF, THDL…PPRF, FQLN…PPST, and LPLE…APQQ. 4 N-linked (GlcNAc...) asparagine glycosylation sites follow: Asn-459, Asn-568, Asn-627, and Asn-789. Residue Asn-996 is glycosylated (N-linked (GlcNAc...) asparagine). N-linked (GlcNAc...) asparagine glycosylation is found at Asn-1175, Asn-1276, and Asn-1417. Asn-1899, Asn-1998, Asn-2007, Asn-2102, Asn-2165, Asn-2183, Asn-2325, Asn-2368, Asn-2387, Asn-2430, Asn-2470, Asn-2547, and Asn-2597 each carry an N-linked (GlcNAc...) asparagine glycan. 3 N-linked (GlcNAc...) asparagine glycosylation sites follow: Asn-3127, Asn-3278, and Asn-3312. Residues Asn-3432, Asn-3603, Asn-3770, Asn-3774, Asn-3815, Asn-3842, Asn-3875, and Asn-3906 are each glycosylated (N-linked (GlcNAc...) asparagine). One can recognise a Laminin G-like domain in the interval 3775–3946; sequence GTTWRFSGQS…YLETWALSQC (172 aa). 4 cysteine pairs are disulfide-bonded: Cys-3914–Cys-3946, Cys-3953–Cys-3964, Cys-3958–Cys-3974, and Cys-3976–Cys-3985. 2 consecutive EGF-like domains span residues 3949–3986 and 3988–4024; these read PGTT…RNCE and GREN…DRCE. Asn-3991 carries N-linked (GlcNAc...) asparagine glycosylation. Intrachain disulfides connect Cys-3992–Cys-4003, Cys-3997–Cys-4012, and Cys-4014–Cys-4023. Residues 4051–4071 traverse the membrane as a helical segment; the sequence is FLVIIVALPLLIIATVGLLLY. Over 4072–4351 the chain is Cytoplasmic; the sequence is CRRCKSHKPV…DYGSCEEVMF (280 aa). The tract at residues 4313–4340 is disordered; that stretch reads DCEVNGGPAPGRSQPRAPPNYEGSDMVE.

Homodimer.

It is found in the cell membrane. The protein resides in the cell junction. It localises to the golgi apparatus. The protein localises to the trans-Golgi network. Involved in the regulation of cell migration. May be involved in mediating the organization of the parallel fibers of granule cells during cerebellar development. This is Protocadherin Fat 2 (Fat2) from Mus musculus (Mouse).